A 1021-amino-acid chain; its full sequence is PDZ domain-containing protein 7 (1021 aa).

2 consecutive PDZ domains span residues 86–156 (AVRV…LTSS) and 210–279 (IVHL…EVLK). Positions 324–344 (SSSSVSSYASSAPCSSGSLPS) are enriched in low complexity. 3 disordered regions span residues 324-345 (SSSSVSSYASSAPCSSGSLPSD), 431-495 (ITRS…DSRS), and 724-814 (RRGA…HRPR). Residues 729–744 (APPPQPPPVAPRPPRP) show a composition bias toward pro residues. The span at 758–767 (QQNQSQTPAQ) shows a compositional bias: polar residues. Basic residues predominate over residues 772-794 (SRSRSRSRSHSRGQGKSPGRRRS). Positions 799-808 (PIATAATANG) are enriched in low complexity. Residues 858 to 930 (TITLSKMKQS…QRAVDTIRRA (73 aa)) enclose the PDZ 3 domain. The disordered stretch occupies residues 992–1021 (QLQQSLSSALKVPQSIPKLSPILKDPHDPS).

As to quaternary structure, homodimerizes (via PDZ2 domain). Component of USH2 complex, composed of ADGRV1, PDZD7, USH2A and WHRN. Interacts (via PDZ domains) with WHRN; the interaction is direct. Interacts with USH1G. Interacts with ADGRV1 (via the cytoplasmic region). Interacts with USH2A (via the cytoplasmic region). Interacts with MYO7A (via MyTH4-FERM domains). In terms of tissue distribution, isoform 1 is expressed in developing and adult cochlea but not retina. Isoform 2 is expressed in developing and adult cochlea and retina. Isoform 3 is expressed in adult cochlea and retina. Isoform 4 is expressed in retina and developing cochlea but not adult cochlea. Isoform 5 is expressed in adult cochlea but not in developing cochlea or retina.

The protein resides in the cell projection. Its subcellular location is the cilium. The protein localises to the nucleus. It localises to the stereocilium. Its function is as follows. In cochlear developing hair cells, essential in organizing the USH2 complex at stereocilia ankle links. Blocks inhibition of adenylate cyclase activity mediated by ADGRV1. This chain is PDZ domain-containing protein 7, found in Mus musculus (Mouse).